A 901-amino-acid polypeptide reads, in one-letter code: Vacuolar import and degradation protein 22 (901 aa).

Polar residues predominate over residues 1-10 (MRAMDTQVQS). Positions 1-54 (MRAMDTQVQSAERGLVLPPMNSTVSSATAATTATNTDTDTDGDRDEERESLAED) are disordered. A glycan (N-linked (GlcNAc...) asparagine) is linked at Asn-21. The segment covering 27–37 (ATAATTATNTD) has biased composition (low complexity). The BED-type zinc-finger motif lies at 66-122 (RDRSRYLGHFLGVDKMLEAVKCKYCGVIIRRQGNSISMAEASQTHLWSTHKIDPNAN). Zn(2+) is bound by residues Cys-87, Cys-90, His-110, and His-115. 2 N-linked (GlcNAc...) asparagine glycosylation sites follow: Asn-242 and Asn-291. The helical transmembrane segment at 381 to 401 (YYHNCIISIINSAILPLFGTP) threads the bilayer. Residues Asn-540, Asn-645, Asn-649, Asn-652, Asn-662, Asn-669, Asn-673, Asn-688, and Asn-722 are each glycosylated (N-linked (GlcNAc...) asparagine). The segment covering 646 to 677 (NSHNTSNHSNMNIHTDNQTNNINNRSGNNSDN) has biased composition (low complexity). The interval 646–727 (NSHNTSNHSN…NSNNNLSFGS (82 aa)) is disordered. Residues 679 to 688 (DNEHDNDNDN) show a composition bias toward basic and acidic residues. Positions 718 to 727 (NSNNNLSFGS) are enriched in low complexity.

This sequence belongs to the VID22 family. Post-translationally, glycosylated.

It localises to the cell membrane. The protein localises to the nucleus. Functionally, has a role in the negative regulation of gluconeogenesis. Imports fructose-1,6-bisphosphatase (FBPase) into the intermediate vacuole import and degradation (Vid) vesicles. This is an indirect role and requires cyclophilin A. The polypeptide is Vacuolar import and degradation protein 22 (VID22) (Saccharomyces cerevisiae (strain ATCC 204508 / S288c) (Baker's yeast)).